The sequence spans 139 residues: MKKTMLLNAQLSRCIASVGHTESLTICDAGLPIPLSVERIDLALTAGVPSFLQTLNVVTNEMYVERVVIAEEIKEKNPEILTALLTQLQQLESHQGNQIQVEFVSHETFKKFTLESKAIVRTGECSPYANVILYSGVPF.

The Proton donor role is filled by His-20. Substrate contacts are provided by residues Asp-28, His-106, and 128-130 (YAN).

Belongs to the RbsD / FucU family. RbsD subfamily. In terms of assembly, homodecamer.

It localises to the cytoplasm. The enzyme catalyses beta-D-ribopyranose = beta-D-ribofuranose. It functions in the pathway carbohydrate metabolism; D-ribose degradation; D-ribose 5-phosphate from beta-D-ribopyranose: step 1/2. Catalyzes the interconversion of beta-pyran and beta-furan forms of D-ribose. This chain is D-ribose pyranase, found in Haemophilus influenzae (strain 86-028NP).